The sequence spans 309 residues: Nucleoside kinase (309 aa).

D16, G42, and N46 together coordinate substrate. Q108 is an ATP binding site. Substrate is bound by residues 110–112 (SYF) and Q166. Residues N189 and 217-223 (KTYGKEG) contribute to the ATP site. Substrate is bound at residue D249. D249 acts as the Proton acceptor in catalysis.

The protein belongs to the carbohydrate kinase PfkB family. In terms of assembly, homodimer. Requires Mg(2+) as cofactor.

In terms of biological role, catalyzes the phosphorylation of a wide range of nucleosides to yield nucleoside monophosphates, using ATP, ITP or GTP as phosphate donor. The sequence is that of Nucleoside kinase from Methanothermobacter thermautotrophicus (strain ATCC 29096 / DSM 1053 / JCM 10044 / NBRC 100330 / Delta H) (Methanobacterium thermoautotrophicum).